Consider the following 262-residue polypeptide: uncharacterized protein (262 aa).

The S4 RNA-binding domain occupies 6–70 (LRINQFLAHY…LKNKKFSVLV (65 aa)). The active-site Nucleophile is Asp-108.

Belongs to the pseudouridine synthase RsuA family.

The catalysed reaction is a uridine in RNA = a pseudouridine in RNA. This is an uncharacterized protein from Helicobacter pylori (strain ATCC 700392 / 26695) (Campylobacter pylori).